The following is a 290-amino-acid chain: 4-hydroxy-tetrahydrodipicolinate synthase (290 aa).

Threonine 44 contributes to the pyruvate binding site. Tyrosine 132 functions as the Proton donor/acceptor in the catalytic mechanism. Lysine 160 (schiff-base intermediate with substrate) is an active-site residue. Isoleucine 202 provides a ligand contact to pyruvate.

The protein belongs to the DapA family. As to quaternary structure, homotetramer; dimer of dimers.

The protein localises to the cytoplasm. The catalysed reaction is L-aspartate 4-semialdehyde + pyruvate = (2S,4S)-4-hydroxy-2,3,4,5-tetrahydrodipicolinate + H2O + H(+). It participates in amino-acid biosynthesis; L-lysine biosynthesis via DAP pathway; (S)-tetrahydrodipicolinate from L-aspartate: step 3/4. Its function is as follows. Catalyzes the condensation of (S)-aspartate-beta-semialdehyde [(S)-ASA] and pyruvate to 4-hydroxy-tetrahydrodipicolinate (HTPA). This Geobacter metallireducens (strain ATCC 53774 / DSM 7210 / GS-15) protein is 4-hydroxy-tetrahydrodipicolinate synthase.